The primary structure comprises 219 residues: Endonuclease III (219 aa).

The 20-residue stretch at 117–136 (MEELLTLPGVARKTANVVLA) folds into the HhH domain. 4 residues coordinate [4Fe-4S] cluster: Cys-197, Cys-204, Cys-207, and Cys-213.

The protein belongs to the Nth/MutY family. The cofactor is [4Fe-4S] cluster.

The enzyme catalyses 2'-deoxyribonucleotide-(2'-deoxyribose 5'-phosphate)-2'-deoxyribonucleotide-DNA = a 3'-end 2'-deoxyribonucleotide-(2,3-dehydro-2,3-deoxyribose 5'-phosphate)-DNA + a 5'-end 5'-phospho-2'-deoxyribonucleoside-DNA + H(+). DNA repair enzyme that has both DNA N-glycosylase activity and AP-lyase activity. The DNA N-glycosylase activity releases various damaged pyrimidines from DNA by cleaving the N-glycosidic bond, leaving an AP (apurinic/apyrimidinic) site. The AP-lyase activity cleaves the phosphodiester bond 3' to the AP site by a beta-elimination, leaving a 3'-terminal unsaturated sugar and a product with a terminal 5'-phosphate. This Synechocystis sp. (strain ATCC 27184 / PCC 6803 / Kazusa) protein is Endonuclease III.